The primary structure comprises 360 residues: Protein Wnt-2 (360 aa).

The first 25 residues, 1-25, serve as a signal peptide directing secretion; sequence MNAPLGGIWLWLPLLLTWLTPEVNS. Disulfide bonds link Cys-76–Cys-87, Cys-127–Cys-135, Cys-137–Cys-157, Cys-206–Cys-220, Cys-208–Cys-215, Cys-278–Cys-309, Cys-294–Cys-304, Cys-308–Cys-348, Cys-324–Cys-339, Cys-326–Cys-336, and Cys-331–Cys-332. Residue Ser-212 is the site of O-palmitoleoyl serine; by PORCN attachment. A glycan (N-linked (GlcNAc...) asparagine) is linked at Asn-295.

Belongs to the Wnt family. Palmitoleoylation is required for efficient binding to frizzled receptors. Depalmitoleoylation leads to Wnt signaling pathway inhibition.

It localises to the secreted. It is found in the extracellular space. The protein resides in the extracellular matrix. Ligand for members of the frizzled family of seven transmembrane receptors. Functions in the canonical Wnt signaling pathway that results in activation of transcription factors of the TCF/LEF family. Functions as a upstream regulator of FGF10 expression. Plays an important role in embryonic lung development. May contribute to embryonic brain development by regulating the proliferation of dopaminergic precursors and neurons. In Gorilla gorilla gorilla (Western lowland gorilla), this protein is Protein Wnt-2 (WNT2).